Reading from the N-terminus, the 258-residue chain is Imidazole glycerol phosphate synthase subunit HisF (258 aa).

Catalysis depends on residues Asp11 and Asp130.

This sequence belongs to the HisA/HisF family. Heterodimer of HisH and HisF.

The protein resides in the cytoplasm. The catalysed reaction is 5-[(5-phospho-1-deoxy-D-ribulos-1-ylimino)methylamino]-1-(5-phospho-beta-D-ribosyl)imidazole-4-carboxamide + L-glutamine = D-erythro-1-(imidazol-4-yl)glycerol 3-phosphate + 5-amino-1-(5-phospho-beta-D-ribosyl)imidazole-4-carboxamide + L-glutamate + H(+). The protein operates within amino-acid biosynthesis; L-histidine biosynthesis; L-histidine from 5-phospho-alpha-D-ribose 1-diphosphate: step 5/9. Its function is as follows. IGPS catalyzes the conversion of PRFAR and glutamine to IGP, AICAR and glutamate. The HisF subunit catalyzes the cyclization activity that produces IGP and AICAR from PRFAR using the ammonia provided by the HisH subunit. This is Imidazole glycerol phosphate synthase subunit HisF from Xanthobacter autotrophicus (strain ATCC BAA-1158 / Py2).